Here is a 189-residue protein sequence, read N- to C-terminus: Elongation factor P (189 aa).

Lys34 carries the post-translational modification N6-(3,6-diaminohexanoyl)-5-hydroxylysine.

The protein belongs to the elongation factor P family. In terms of processing, may be beta-lysylated on the epsilon-amino group of Lys-34 by the combined action of EpmA and EpmB, and then hydroxylated on the C5 position of the same residue by EpmC (if this protein is present). Lysylation is critical for the stimulatory effect of EF-P on peptide-bond formation. The lysylation moiety may extend toward the peptidyltransferase center and stabilize the terminal 3-CCA end of the tRNA. Hydroxylation of the C5 position on Lys-34 may allow additional potential stabilizing hydrogen-bond interactions with the P-tRNA.

The protein resides in the cytoplasm. It participates in protein biosynthesis; polypeptide chain elongation. In terms of biological role, involved in peptide bond synthesis. Alleviates ribosome stalling that occurs when 3 or more consecutive Pro residues or the sequence PPG is present in a protein, possibly by augmenting the peptidyl transferase activity of the ribosome. Modification of Lys-34 is required for alleviation. The chain is Elongation factor P from Buchnera aphidicola subsp. Acyrthosiphon pisum (strain APS) (Acyrthosiphon pisum symbiotic bacterium).